The chain runs to 760 residues: MAGQQFQYDDSGNTFFYFLTSFVGLIVIPATYYLWPRDQNAEQIRLKNIRKVYGRCMWYRLRLLKPQPNIIPTVKKIVLLAGWALFLFLAYKVSKTDREYQEYNPYEVLNLDPGATVAEIKKQYRLLSLKYHPDKGGDEVMFMRIAKAYAALTDEESRKNWEEFGNPDGPQATSFGIALPAWIVDQKNSILVLLVYGLAFMVILPVVVGSWWYRSIRYSGDQILIRTTQIYTYFVYKTRNMDMKRLIMVLAGASEFDPQYNKDATSRPTDNILIPQLIREIGSINLKKNEPPLTCPYSLKARVLLLSHLARMKIPETLEEDQQFMLKKCPALLQEMVNVICQLIVMARNREEREFRAPTLASLENCMKLSQMAVQGLQQFKSPLLQLPHIEEDNLRRVSNHKKYKIKTIQDLVSLKESDRHTLLHFLEDEKYEEVMAVLGSFPYVTMDIKSQVLDDEDSNNITVGSLVTVLVKLTRQTMAEVFEKEQSICAAEEQPAEDGQGETNKNRTKGGWQQKSKGPKKTAKSKKKKPLKKKPTPVLLPQSKQQKQKQANGVVGNEAAVKEDEEEVSDKGSDSEEEETNRDSQSEKDDGSDRDSDREQDEKQNKDDEAEWQELQQSIQRKERALLETKSKITHPVYSLYFPEEKQEWWWLYIADRKEQTLISMPYHVCTLKDTEEVELKFPAPGKPGNYQYTVFLRSDSYMGLDQIKPLKLEVHEAKPVPENHPQWDTAIEGDEDQEDSEGFEDSFEEEEEEEEDDD.

Residues 1-14 (MAGQQFQYDDSGNT) lie on the Lumenal side of the membrane. The helical transmembrane segment at 15–35 (FFYFLTSFVGLIVIPATYYLW) threads the bilayer. Residues 36-69 (PRDQNAEQIRLKNIRKVYGRCMWYRLRLLKPQPN) are Cytoplasmic-facing. A helical membrane pass occupies residues 70–90 (IIPTVKKIVLLAGWALFLFLA). At 91–188 (YKVSKTDREY…LPAWIVDQKN (98 aa)) the chain is on the lumenal side. The 62-residue stretch at 104–165 (NPYEVLNLDP…ESRKNWEEFG (62 aa)) folds into the J domain. The chain crosses the membrane as a helical span at residues 189–209 (SILVLLVYGLAFMVILPVVVG). In terms of domain architecture, SEC63 1 spans 197-541 (GLAFMVILPV…LKKKPTPVLL (345 aa)). At 210-760 (SWWYRSIRYS…EEEEEEEDDD (551 aa)) the chain is on the cytoplasmic side. Residues 492–617 (AEEQPAEDGQ…DDEAEWQELQ (126 aa)) form a disordered region. The segment covering 518–536 (KGPKKTAKSKKKKPLKKKP) has biased composition (basic residues). Phosphothreonine is present on Thr537. Over residues 582–608 (NRDSQSEKDDGSDRDSDREQDEKQNKD) the composition is skewed to basic and acidic residues. The stretch at 597-635 (SDREQDEKQNKDDEAEWQELQQSIQRKERALLETKSKIT) forms a coiled coil. Residues 637 to 714 (PVYSLYFPEE…GLDQIKPLKL (78 aa)) form the SEC63 2 domain. The segment at 720–760 (KPVPENHPQWDTAIEGDEDQEDSEGFEDSFEEEEEEEEDDD) is disordered. Acidic residues predominate over residues 733-760 (IEGDEDQEDSEGFEDSFEEEEEEEEDDD). Residues Ser742 and Ser748 each carry the phosphoserine modification.

As to quaternary structure, the ER translocon complex consists of channel-forming core components SEC61A1, SEC61B and SEC61G and different auxiliary components such as SEC62 and SEC63. In terms of tissue distribution, widely expressed, with high levels in the liver.

It localises to the endoplasmic reticulum membrane. Functionally, mediates cotranslational and post-translational transport of certain precursor polypeptides across endoplasmic reticulum (ER). Proposed to play an auxiliary role in recognition of precursors with short and apolar signal peptides. May cooperate with SEC62 and HSPA5/BiP to facilitate targeting of small presecretory proteins into the SEC61 channel-forming translocon complex, triggering channel opening for polypeptide translocation to the ER lumen. Required for efficient PKD1/Polycystin-1 biogenesis and trafficking to the plasma membrane of the primary cilia. This Homo sapiens (Human) protein is Translocation protein SEC63 homolog.